Here is a 142-residue protein sequence, read N- to C-terminus: Protein E6 (142 aa).

2 zinc fingers span residues 27-63 (CIFC…CTKC) and 100-136 (CQHC…CRNC).

This sequence belongs to the papillomaviridae E6 protein family. Forms homodimers. Interacts with ubiquitin-protein ligase UBE3A/E6-AP; this interaction stimulates UBE3A ubiquitin activity. Interacts with host BAK1.

It is found in the host cytoplasm. The protein resides in the host nucleus. In terms of biological role, plays a major role in the induction and maintenance of cellular transformation. E6 associates with host UBE3A/E6-AP ubiquitin-protein ligase and modulates its activity. Protects host keratinocytes from apoptosis by mediating the degradation of host BAK1. May also inhibit host immune response. This chain is Protein E6, found in Homo sapiens (Human).